The primary structure comprises 401 residues: S-adenosylmethionine synthase (401 aa).

136–141 (GQGSVD) serves as a coordination point for ATP.

It belongs to the AdoMet synthase 2 family. It depends on Mg(2+) as a cofactor.

It carries out the reaction L-methionine + ATP + H2O = S-adenosyl-L-methionine + phosphate + diphosphate. It functions in the pathway amino-acid biosynthesis; S-adenosyl-L-methionine biosynthesis; S-adenosyl-L-methionine from L-methionine: step 1/1. Catalyzes the formation of S-adenosylmethionine from methionine and ATP. The sequence is that of S-adenosylmethionine synthase from Pyrococcus furiosus (strain ATCC 43587 / DSM 3638 / JCM 8422 / Vc1).